A 300-amino-acid polypeptide reads, in one-letter code: Ribosomal RNA small subunit methyltransferase H (300 aa).

Residues Ala33–His35, Asp52, Phe86, Asp97, and Gln104 each bind S-adenosyl-L-methionine.

This sequence belongs to the methyltransferase superfamily. RsmH family.

It is found in the cytoplasm. The enzyme catalyses cytidine(1402) in 16S rRNA + S-adenosyl-L-methionine = N(4)-methylcytidine(1402) in 16S rRNA + S-adenosyl-L-homocysteine + H(+). Specifically methylates the N4 position of cytidine in position 1402 (C1402) of 16S rRNA. This chain is Ribosomal RNA small subunit methyltransferase H, found in Aliarcobacter butzleri (strain RM4018) (Arcobacter butzleri).